We begin with the raw amino-acid sequence, 202 residues long: MQDNQVLANTASMIMPKSSFITTKQLWEIVLQGKVEATEFIPADVSDSTQTVDRSNKISPITSQLTIEPNKSQTIVKKNPDNLIFVAVNQNVQLQLSILKQQQNRVAAMESALQRIHLEITAMSEQLILQKYQKNRFFFMSSINALIRISRNCIKLLFKNSLVLLAACYFMNTTPSRLVINLIRSGYLILKRFANPSYISFY.

Its subcellular location is the mitochondrion. This is an uncharacterized protein from Schizosaccharomyces pombe (strain 972 / ATCC 24843) (Fission yeast).